A 316-amino-acid polypeptide reads, in one-letter code: Actinorhodin polyketide synthase bifunctional cyclase/dehydratase (316 aa).

Its pathway is antibiotic biosynthesis; actinorhodin biosynthesis. Is needed for correct cyclization of the oligoketide leading to isochromanequinone formation. The protein is Actinorhodin polyketide synthase bifunctional cyclase/dehydratase of Streptomyces coelicolor (strain ATCC BAA-471 / A3(2) / M145).